The following is an 887-amino-acid chain: Alanine--tRNA ligase (887 aa).

Zn(2+) contacts are provided by H563, H567, C677, and H681.

The protein belongs to the class-II aminoacyl-tRNA synthetase family. Zn(2+) serves as cofactor.

It is found in the cytoplasm. It catalyses the reaction tRNA(Ala) + L-alanine + ATP = L-alanyl-tRNA(Ala) + AMP + diphosphate. In terms of biological role, catalyzes the attachment of alanine to tRNA(Ala) in a two-step reaction: alanine is first activated by ATP to form Ala-AMP and then transferred to the acceptor end of tRNA(Ala). Also edits incorrectly charged Ser-tRNA(Ala) and Gly-tRNA(Ala) via its editing domain. The protein is Alanine--tRNA ligase of Dinoroseobacter shibae (strain DSM 16493 / NCIMB 14021 / DFL 12).